The chain runs to 187 residues: Shikimate kinase (187 aa).

18 to 23 (GCGKST) serves as a coordination point for ATP. Position 22 (serine 22) interacts with Mg(2+). Substrate contacts are provided by aspartate 40, arginine 64, and glycine 86. Arginine 128 provides a ligand contact to ATP. Arginine 147 contributes to the substrate binding site. Arginine 164 is a binding site for ATP.

The protein belongs to the shikimate kinase family. As to quaternary structure, monomer. It depends on Mg(2+) as a cofactor.

The protein localises to the cytoplasm. The catalysed reaction is shikimate + ATP = 3-phosphoshikimate + ADP + H(+). It functions in the pathway metabolic intermediate biosynthesis; chorismate biosynthesis; chorismate from D-erythrose 4-phosphate and phosphoenolpyruvate: step 5/7. In terms of biological role, catalyzes the specific phosphorylation of the 3-hydroxyl group of shikimic acid using ATP as a cosubstrate. This Rhodopirellula baltica (strain DSM 10527 / NCIMB 13988 / SH1) protein is Shikimate kinase.